A 221-amino-acid chain; its full sequence is PKHD-type hydroxylase Pro_1271 (221 aa).

The region spanning 80-174 is the Fe2OG dioxygenase domain; it reads KVHGVMFSKS…RIVCVGWIQS (95 aa). 3 residues coordinate Fe cation: His-98, Asp-100, and His-155. 2-oxoglutarate is bound at residue Arg-165.

Requires Fe(2+) as cofactor. The cofactor is L-ascorbate.

This Prochlorococcus marinus (strain SARG / CCMP1375 / SS120) protein is PKHD-type hydroxylase Pro_1271.